We begin with the raw amino-acid sequence, 615 residues long: MESMFEDDISILTQEALGPSEVWLDSPGDPSLGGDMCSASHFALITAYGDIKERLGGLERENATLRRRLKVYEIKYPLISDFGEEHGFSLYEIKDGSLLEVEKVSLQQRLNQFQHELQKNKEQEEQLGEMIQAYEKLCVEKSDLETELREMRALVETHLRQICGLEQQLRQQQGLQDAAFSNLSPPPAPAPPCTDLDLHYLALRGGSGLSHAGWPGSTPSVSDLERRRLEEALEAAQGEARGAQLREEQLQAECERLQGELKQLQETRAQDLASNQSERDMAWVKRVGDDQVNLALAYTELTEELGRLRELSSLQGRILRTLLQEQARSGGQRHSPLSQRHSPAPQCPSPSPPARAAPPCPPCQSPVPQRRSPVPPCPSPQQRRSPASPSCPSPVPQRRSPVPPSCQSPSPQRRSPVPPSCPAPQPRPPPPPPPGERTLAERAYAKPPSHHVKAGFQGRRSYSELAEGAAYAGASPPWLQAEAATLPKPRAYGSELYGPGRPLSPRRAFEGIRLRFEKQPSEEDEWAVPTSPPSPEVGTIRCASFCAGFPIPESPAATAYAHAEHAQSWPSINLLMETVGSDIRSCPLCQLGFPVGYPDDALIKHIDSHLENSKI.

The tract at residues 1–279 is homodimerization; that stretch reads MESMFEDDIS…QDLASNQSER (279 aa). Residues 48 to 162 adopt a coiled-coil conformation; it reads YGDIKERLGG…ALVETHLRQI (115 aa). Position 184 is a phosphoserine (Ser-184). Residues 221 to 276 adopt a coiled-coil conformation; the sequence is VSDLERRRLEEALEAAQGEARGAQLREEQLQAECERLQGELKQLQETRAQDLASNQ. Residues 280-329 form an interaction with TBK1 and IKBKE region; sequence DMAWVKRVGDDQVNLALAYTELTEELGRLRELSSLQGRILRTLLQEQARS. The segment at 326 to 458 is disordered; that stretch reads QARSGGQRHS…SHHVKAGFQG (133 aa). The span at 345–365 shows a compositional bias: pro residues; that stretch reads PQCPSPSPPARAAPPCPPCQS. A phosphoserine mark is found at Ser-365, Ser-372, Ser-379, Ser-385, Ser-400, and Ser-415. Residues 389 to 406 are compositionally biased toward pro residues; sequence PSCPSPVPQRRSPVPPSC. Pro residues predominate over residues 416 to 435; that stretch reads PVPPSCPAPQPRPPPPPPPG. Phosphoserine occurs at positions 504 and 534. The UBZ1-type zinc finger occupies 583–609; it reads IRSCPLCQLGFPVGYPDDALIKHIDSH. Residues Cys-586, Cys-589, His-605, and His-609 each contribute to the Zn(2+) site.

As to quaternary structure, homodimer. May form a heterodimer with NAP1. Interacts with TKB1 and IKBKE. Weakly interacts with DDX3X. In terms of assembly, (Microbial infection) Interacts with vaccinia virus protein C6. Detected in leukocytes, lung, placenta, small intestine, liver, kidney, spleen, muscle, heart, brain and at low levels in thymus.

In terms of biological role, adapter protein which constitutively binds TBK1 and IKBKE playing a role in antiviral innate immunity. The chain is TANK-binding kinase 1-binding protein 1 from Homo sapiens (Human).